Here is an 847-residue protein sequence, read N- to C-terminus: Collagen alpha-1(I) chain (847 aa).

Residues 1 to 847 (GPMGPSGPRG…PGPIGPPGPR (847 aa)) form a disordered region. Low complexity predominate over residues 20 to 39 (PQGFQGPPGEPGEPGSSGPM). Positions 51-65 (NGDDGEAGKPGRPGE) are enriched in basic and acidic residues. Ser-85 carries the phosphoserine modification. Composition is skewed to low complexity over residues 93 to 109 (DAGP…PGEN) and 127 to 145 (PGAS…TGAA). Over residues 147-159 (PPGPTGPAGPPGF) the composition is skewed to pro residues. Composition is skewed to low complexity over residues 193–208 (AGAA…DGQP), 219–228 (QGPSGAPGPK), 298–314 (PKGI…DGKT), 334–343 (PGPKGAAGEP), 500–543 (PSGP…KGDA), 551–599 (PTGA…NAGA), and 628–638 (SPGADGPAGAP). Position 501 is a phosphoserine (Ser-501). Residues 685–695 (PPGPMGPPGIA) show a composition bias toward pro residues. A compositionally biased stretch (low complexity) spans 697–712 (PPGESGREGSPGAEGS). A compositionally biased stretch (pro residues) spans 731–746 (SGPPGAPGAPGAPGPV). Residues 763-777 (AGPAGARGPSGPQGP) show a composition bias toward low complexity. Over residues 778 to 789 (RGDKGETGEQGD) the composition is skewed to basic and acidic residues. Low complexity predominate over residues 793 to 838 (SGIQGPPGAPGSPGEQGPSGASGPAGPRGPPGSAGSPGKDGINGIP).

It belongs to the fibrillar collagen family. Trimers of one alpha 2(I) and two alpha 1(I) chains. Post-translationally, prolines at the third position of the tripeptide repeating unit (G-X-Y) are hydroxylated in some or all of the chains. In terms of tissue distribution, forms the fibrils of tendon, ligaments and bones. In bones, the fibrils are mineralized with calcium hydroxyapatite.

Its subcellular location is the secreted. The protein localises to the extracellular space. It localises to the extracellular matrix. Its function is as follows. Type I collagen is a member of group I collagen (fibrillar forming collagen). In Cyclopes didactylus (Silky anteater), this protein is Collagen alpha-1(I) chain.